The chain runs to 609 residues: Probable G-protein coupled receptor 153 (609 aa).

Residues 1 to 11 (MSDERRLPGSA) lie on the Extracellular side of the membrane. The helical transmembrane segment at 12–32 (VGWLVCGGLSLLANAWGILSV) threads the bilayer. Residues 33-41 (GAKQKKWKP) lie on the Cytoplasmic side of the membrane. The helical transmembrane segment at 42-62 (LEFLLCTLAATHMLNVAVPIA) threads the bilayer. The Extracellular portion of the chain corresponds to 63–84 (TYSVVQLRRQRPDFEWNEGLCK). Residues 85 to 105 (VFVSTFYTLTLATCFSVTSLS) traverse the membrane as a helical segment. The Cytoplasmic segment spans residues 106–126 (YHRMWMVCWPVNYRLSNAKKQ). A helical transmembrane segment spans residues 127–147 (AVHTVMGIWMVSFILSALPAV). Over 148 to 175 (GWHDTSERFYTHGCRFIVAEIGLGFGVC) the chain is Extracellular. The helical transmembrane segment at 176-196 (FLLLVGGSVAMGVICTAIALF) threads the bilayer. The Cytoplasmic portion of the chain corresponds to 197-243 (QTLAVQVGRQADRRAFTVPTIVVEDAQGKRRSSIDGSEPAKTSLQTT). Residues 244-264 (GLVTTIVFIYDCLMGFPVLVV) form a helical membrane-spanning segment. Residues 265–276 (SFSSLRADASAP) are Extracellular-facing. A helical transmembrane segment spans residues 277–297 (WMALCVLWCSVAQALLLPVFL). Residues 298-609 (WACDRYRADL…LHSDSLGSAS (312 aa)) lie on the Cytoplasmic side of the membrane. Disordered regions lie at residues 446 to 496 (DAPP…SASA) and 514 to 609 (ALRR…GSAS). Low complexity-rich tracts occupy residues 458–479 (ESLL…RDSP) and 527–536 (AAPDGADPGE). The span at 571 to 583 (EPGGLRAAGGGGS) shows a compositional bias: gly residues. The segment covering 584–596 (TSSFLSSPSESSG) has biased composition (low complexity).

Belongs to the G-protein coupled receptor 1 family.

It is found in the cell membrane. Its function is as follows. Orphan receptor. This chain is Probable G-protein coupled receptor 153 (GPR153), found in Homo sapiens (Human).